Consider the following 112-residue polypeptide: UPF0145 protein CD630_17110 (112 aa).

The protein belongs to the UPF0145 family.

In Clostridioides difficile (strain 630) (Peptoclostridium difficile), this protein is UPF0145 protein CD630_17110.